The following is a 288-amino-acid chain: Diaminopimelate epimerase (288 aa).

The substrate site is built by N13, Q51, and N71. The Proton donor role is filled by C80. Substrate contacts are provided by residues 81-82 (GN), N166, N200, and 218-219 (ER). C227 serves as the catalytic Proton acceptor. Residue 228–229 (GT) coordinates substrate.

This sequence belongs to the diaminopimelate epimerase family. In terms of assembly, homodimer.

It is found in the cytoplasm. The enzyme catalyses (2S,6S)-2,6-diaminopimelate = meso-2,6-diaminopimelate. The protein operates within amino-acid biosynthesis; L-lysine biosynthesis via DAP pathway; DL-2,6-diaminopimelate from LL-2,6-diaminopimelate: step 1/1. Catalyzes the stereoinversion of LL-2,6-diaminopimelate (L,L-DAP) to meso-diaminopimelate (meso-DAP), a precursor of L-lysine and an essential component of the bacterial peptidoglycan. This Caulobacter vibrioides (strain ATCC 19089 / CIP 103742 / CB 15) (Caulobacter crescentus) protein is Diaminopimelate epimerase.